We begin with the raw amino-acid sequence, 224 residues long: Lipoprotein-releasing system ATP-binding protein LolD (224 aa).

One can recognise an ABC transporter domain in the interval 4–224 (LSIRNVFKSY…RLAGGEVSEA (221 aa)). Residue 40–47 (GASGAGKS) participates in ATP binding.

This sequence belongs to the ABC transporter superfamily. Lipoprotein translocase (TC 3.A.1.125) family. As to quaternary structure, the complex is composed of two ATP-binding proteins (LolD) and two transmembrane proteins (LolC and LolE).

It is found in the cell inner membrane. Functionally, part of the ABC transporter complex LolCDE involved in the translocation of mature outer membrane-directed lipoproteins, from the inner membrane to the periplasmic chaperone, LolA. Responsible for the formation of the LolA-lipoprotein complex in an ATP-dependent manner. The sequence is that of Lipoprotein-releasing system ATP-binding protein LolD from Myxococcus xanthus (strain DK1622).